The following is a 62-amino-acid chain: MARKALWAKSFLKEPKFKTRKHARCPLCGRPRGYLRQFDMCRICFRERALRGEIPGVKKASW.

Zn(2+) contacts are provided by Cys25, Cys28, Cys41, and Cys44.

This sequence belongs to the universal ribosomal protein uS14 family. Zinc-binding uS14 subfamily. In terms of assembly, part of the 30S ribosomal subunit. Contacts proteins S3 and S10. The cofactor is Zn(2+).

Binds 16S rRNA, required for the assembly of 30S particles and may also be responsible for determining the conformation of the 16S rRNA at the A site. In Persephonella marina (strain DSM 14350 / EX-H1), this protein is Small ribosomal subunit protein uS14.